The following is a 288-amino-acid chain: Polyamine aminopropyltransferase (288 aa).

Residues 9-238 form the PABS domain; that stretch reads ETLHDQFGQY…GIMTFAWATD (230 aa). Q33 is a binding site for S-methyl-5'-thioadenosine. Positions 64 and 88 each coordinate spermidine. Residues E108 and 140–141 contribute to the S-methyl-5'-thioadenosine site; that span reads DG. D158 (proton acceptor) is an active-site residue. Residue 158–161 coordinates spermidine; it reads DCTD. P165 provides a ligand contact to S-methyl-5'-thioadenosine.

It belongs to the spermidine/spermine synthase family. As to quaternary structure, homodimer or homotetramer.

The protein resides in the cytoplasm. The enzyme catalyses S-adenosyl 3-(methylsulfanyl)propylamine + putrescine = S-methyl-5'-thioadenosine + spermidine + H(+). It participates in amine and polyamine biosynthesis; spermidine biosynthesis; spermidine from putrescine: step 1/1. In terms of biological role, catalyzes the irreversible transfer of a propylamine group from the amino donor S-adenosylmethioninamine (decarboxy-AdoMet) to putrescine (1,4-diaminobutane) to yield spermidine. This chain is Polyamine aminopropyltransferase, found in Escherichia fergusonii (strain ATCC 35469 / DSM 13698 / CCUG 18766 / IAM 14443 / JCM 21226 / LMG 7866 / NBRC 102419 / NCTC 12128 / CDC 0568-73).